An 889-amino-acid chain; its full sequence is MESHGDEGEPSAMAKPPKKLPMSRKGFGTRGQSIQLLTNHFRVSVRRMDGHFYHYHVEVKYEDGGPVEAKGVCRRVVDKLQETYASELAGREFAYNGEKGLFTAGALLQTKHQFVVVMEDASSSGRTTTRRSSGGDDGSPGGSDRKRMKRPMAVKKFMVEISFAAKDPMSAIAEVLRGQETENSMEALRVLDITLRQHSAKHARDTASCPSYPSAMDGWMKTGVPKGGREKISCRGFHSSFRPTDSGLSLNVDVSTTMIVRPGPVIEFLLFNQNIKNPHEIDWGKAKCALKNLRIKTTHTGSEFRIIGLSEDTCYSQTFQIKRKNGNGGSDTVEEVTVFEYYRKNWKIDLKGSAHFPCLNVGKPKRPTYIPLELCHLVPLQRYKKALSTLQRSTLVERSRQNPQERMFVLSGVLRDSDYNSVPMLRECGISIAQEFTQVAARVLPAPKLKSGDGEDIFARNGRWNFNKNRLIQPKRVQRWVVVNFSAQCNAHHLAQRLIHCGNLKGLPVDPEDHVFQERSHMGRERAETRVNDMFQQLLSGDKPSFVLCVLPERKNCDIYGPWKRMCLVKYGIVTQCLAPTKINDQYLTNVLLKINAKLGGLNSLLQIERNQAIPLLSKTPTIILGMDVSHGSPGRDDVPSVAAVVSSLEWPLISKYKASVCTQSPRLEMIDSLFKLVGNEDHVIIRESLMDFYNSSRGHKDGVSEGQFNQVLNIELAQIIKACEFLANEKNDSEWSPKFTVIVAQKNHHTKFFQTDRSNKVVNVPPGTVVDKGICHPRNCDFYMCAHAGMIGTTRPTHYHVLHDENNFTPDDLQELVHNLSYVYQRSTTAISGVAPICYAHLAAAQVSQFVRLDDAASEGSGDGGAPPRPVPELPRLHPDVRQSMFFC.

Disordered stretches follow at residues 1-26 and 119-150; these read MESH…SRKG and EDAS…RMKR. Residues 122–132 show a composition bias toward low complexity; that stretch reads SSSGRTTTRRS. The region spanning 264–379 is the PAZ domain; it reads PVIEFLLFNQ…IPLELCHLVP (116 aa). The Piwi domain maps to 546-853; that stretch reads FVLCVLPERK…AAAQVSQFVR (308 aa). The disordered stretch occupies residues 857–878; the sequence is AASEGSGDGGAPPRPVPELPRL.

Belongs to the argonaute family. Ago subfamily.

Its function is as follows. Probably involved in the RNA silencing pathway. May bind to short RNAs such as microRNAs (miRNAs) or short interfering RNAs (siRNAs), and represses the translation of mRNAs which are complementary to them. This is Protein argonaute 15 (AGO15) from Oryza sativa subsp. japonica (Rice).